The chain runs to 507 residues: Probable malate:quinone oxidoreductase 2 (507 aa).

It belongs to the MQO family. FAD is required as a cofactor.

The enzyme catalyses (S)-malate + a quinone = a quinol + oxaloacetate. It participates in carbohydrate metabolism; tricarboxylic acid cycle; oxaloacetate from (S)-malate (quinone route): step 1/1. This chain is Probable malate:quinone oxidoreductase 2, found in Pseudomonas aeruginosa (strain ATCC 15692 / DSM 22644 / CIP 104116 / JCM 14847 / LMG 12228 / 1C / PRS 101 / PAO1).